The sequence spans 256 residues: Probable serine/threonine-protein kinase YbdM (256 aa).

A Protein kinase domain is found at 25–256; sequence YKIEECLGMG…DLNRAIQSVT (232 aa). ATP is bound by residues 31 to 39 and Lys-54; that span reads LGMGGYGLV. Asp-149 acts as the Proton acceptor in catalysis.

It belongs to the protein kinase superfamily. Ser/Thr protein kinase family.

It carries out the reaction L-seryl-[protein] + ATP = O-phospho-L-seryl-[protein] + ADP + H(+). The enzyme catalyses L-threonyl-[protein] + ATP = O-phospho-L-threonyl-[protein] + ADP + H(+). In Bacillus subtilis (strain 168), this protein is Probable serine/threonine-protein kinase YbdM (ybdM).